The following is a 542-amino-acid chain: CTP synthase (542 aa).

Residues 1 to 264 (MKFIFITGGV…AKLIINKLKL (264 aa)) form an amidoligase domain region. Residue Ser12 participates in CTP binding. Ser12 provides a ligand contact to UTP. 13–18 (SLGKGI) is an ATP binding site. Tyr53 is a binding site for L-glutamine. Asp70 contacts ATP. Positions 70 and 138 each coordinate Mg(2+). CTP contacts are provided by residues 145–147 (DIE), 185–190 (KTKPTQ), and Lys221. Residues 185-190 (KTKPTQ) and Lys221 each bind UTP. 237-239 (KDA) is an ATP binding site. The 244-residue stretch at 298–541 (YIMLKDAYTS…VKSALDKKLK (244 aa)) folds into the Glutamine amidotransferase type-1 domain. Gly359 is an L-glutamine binding site. The Nucleophile; for glutamine hydrolysis role is filled by Cys386. L-glutamine contacts are provided by residues 387-390 (LGMQ), Glu410, and Arg467. Catalysis depends on residues His514 and Glu516.

This sequence belongs to the CTP synthase family. Homotetramer.

It catalyses the reaction UTP + L-glutamine + ATP + H2O = CTP + L-glutamate + ADP + phosphate + 2 H(+). The catalysed reaction is L-glutamine + H2O = L-glutamate + NH4(+). The enzyme catalyses UTP + NH4(+) + ATP = CTP + ADP + phosphate + 2 H(+). Its pathway is pyrimidine metabolism; CTP biosynthesis via de novo pathway; CTP from UDP: step 2/2. With respect to regulation, allosterically activated by GTP, when glutamine is the substrate; GTP has no effect on the reaction when ammonia is the substrate. The allosteric effector GTP functions by stabilizing the protein conformation that binds the tetrahedral intermediate(s) formed during glutamine hydrolysis. Inhibited by the product CTP, via allosteric rather than competitive inhibition. In terms of biological role, catalyzes the ATP-dependent amination of UTP to CTP with either L-glutamine or ammonia as the source of nitrogen. Regulates intracellular CTP levels through interactions with the four ribonucleotide triphosphates. The chain is CTP synthase from Methanococcus aeolicus (strain ATCC BAA-1280 / DSM 17508 / OCM 812 / Nankai-3).